The primary structure comprises 135 residues: uncharacterized protein (135 aa).

Belongs to the asp23 family.

This is an uncharacterized protein from Bacillus subtilis (strain 168).